Consider the following 104-residue polypeptide: L-rhamnose mutarotase (104 aa).

Tyr18 serves as a coordination point for substrate. The active-site Proton donor is the His22. Residues Tyr41 and 76–77 (WW) contribute to the substrate site.

It belongs to the rhamnose mutarotase family. In terms of assembly, homodimer.

Its subcellular location is the cytoplasm. The catalysed reaction is alpha-L-rhamnose = beta-L-rhamnose. The protein operates within carbohydrate metabolism; L-rhamnose metabolism. In terms of biological role, involved in the anomeric conversion of L-rhamnose. The protein is L-rhamnose mutarotase of Escherichia fergusonii (strain ATCC 35469 / DSM 13698 / CCUG 18766 / IAM 14443 / JCM 21226 / LMG 7866 / NBRC 102419 / NCTC 12128 / CDC 0568-73).